Here is a 124-residue protein sequence, read N- to C-terminus: MSYQDPQHPVSAPPPQGYPPKEGYPPAGYPPPAGYPPPQYPQAGYPPAGYPPPQQGYGQGYPAQGYPPPQYPQGHPPQYPYQGPPPPHYGQAPPKNKKDKKDSGGFMEGCLAMLCCCVLLEACF.

The interval 1–103 (MSYQDPQHPV…PKNKKDKKDS (103 aa)) is disordered. Pro residues-rich tracts occupy residues 27 to 40 (AGYP…PPQY) and 65 to 88 (GYPP…PPPH). The helical transmembrane segment at 101 to 118 (KDSGGFMEGCLAMLCCCV) threads the bilayer.

This sequence belongs to the CYSTM1 family. In terms of assembly, heterodimers. Interacts with CYSTM7 and WIH1/CYSTM13. In terms of tissue distribution, mostly expressed in stems and,at low levels, in stems, roots, flowers, siliques and leaves.

The protein localises to the cell membrane. Its subcellular location is the cytoplasm. In terms of biological role, involved in resistance to abiotic stress. The chain is Protein CYSTEINE-RICH TRANSMEMBRANE MODULE 10 from Arabidopsis thaliana (Mouse-ear cress).